A 74-amino-acid polypeptide reads, in one-letter code: DNA-directed RNA polymerase subunit omega (74 aa).

It belongs to the RNA polymerase subunit omega family. As to quaternary structure, the RNAP catalytic core consists of 2 alpha, 1 beta, 1 beta' and 1 omega subunit. When a sigma factor is associated with the core the holoenzyme is formed, which can initiate transcription.

It carries out the reaction RNA(n) + a ribonucleoside 5'-triphosphate = RNA(n+1) + diphosphate. Its function is as follows. Promotes RNA polymerase assembly. Latches the N- and C-terminal regions of the beta' subunit thereby facilitating its interaction with the beta and alpha subunits. The sequence is that of DNA-directed RNA polymerase subunit omega from Lactobacillus acidophilus (strain ATCC 700396 / NCK56 / N2 / NCFM).